We begin with the raw amino-acid sequence, 389 residues long: Succinyl-diaminopimelate desuccinylase (389 aa).

Histidine 75 is a Zn(2+) binding site. Aspartate 77 is an active-site residue. Aspartate 108 contacts Zn(2+). The active-site Proton acceptor is the glutamate 142. Zn(2+) is bound by residues glutamate 143, glutamate 171, and histidine 357.

The protein belongs to the peptidase M20A family. DapE subfamily. Homodimer. The cofactor is Zn(2+). Requires Co(2+) as cofactor.

It catalyses the reaction N-succinyl-(2S,6S)-2,6-diaminopimelate + H2O = (2S,6S)-2,6-diaminopimelate + succinate. It functions in the pathway amino-acid biosynthesis; L-lysine biosynthesis via DAP pathway; LL-2,6-diaminopimelate from (S)-tetrahydrodipicolinate (succinylase route): step 3/3. Catalyzes the hydrolysis of N-succinyl-L,L-diaminopimelic acid (SDAP), forming succinate and LL-2,6-diaminopimelate (DAP), an intermediate involved in the bacterial biosynthesis of lysine and meso-diaminopimelic acid, an essential component of bacterial cell walls. In Paracidovorax citrulli (strain AAC00-1) (Acidovorax citrulli), this protein is Succinyl-diaminopimelate desuccinylase.